The following is a 572-amino-acid chain: Phosphoglucomutase-1 (572 aa).

Substrate is bound by residues Thr23, Arg27, 120 to 121, and Lys133; that span reads SH. Catalysis depends on Ser120, which acts as the Phosphoserine intermediate. Ser120 is a binding site for Mg(2+). 3 residues coordinate Mg(2+): Asp288, Asp290, and Asp292. Residues 292–293, Thr356, 375–377, Lys388, and Arg524 each bind substrate; these read DR and EES.

It belongs to the phosphohexose mutase family. The cofactor is Mg(2+).

It localises to the cytoplasm. It catalyses the reaction alpha-D-glucose 1-phosphate = alpha-D-glucose 6-phosphate. Functionally, this enzyme participates in both the breakdown and synthesis of glucose. The polypeptide is Phosphoglucomutase-1 (pgmA) (Dictyostelium discoideum (Social amoeba)).